The chain runs to 683 residues: Translation factor guf1, mitochondrial (683 aa).

The N-terminal 43 residues, 1–43, are a transit peptide targeting the mitochondrion; it reads MRGCLQLARWLSAAPKGTAASLTRAPFVLANAPRFFTSSASHA. Positions 66–250 constitute a tr-type G domain; it reads ERYRNFCIVA…KIPAYGYFPV (185 aa). GTP contacts are provided by residues 75 to 82, 139 to 143, and 193 to 196; these read AHVDHGKS, DTPGH, and NKVD.

The protein belongs to the TRAFAC class translation factor GTPase superfamily. Classic translation factor GTPase family. LepA subfamily.

It is found in the mitochondrion inner membrane. The catalysed reaction is GTP + H2O = GDP + phosphate + H(+). In terms of biological role, promotes mitochondrial protein synthesis. May act as a fidelity factor of the translation reaction, by catalyzing a one-codon backward translocation of tRNAs on improperly translocated ribosomes. Binds to mitochondrial ribosomes in a GTP-dependent manner. The chain is Translation factor guf1, mitochondrial (guf1) from Neosartorya fischeri (strain ATCC 1020 / DSM 3700 / CBS 544.65 / FGSC A1164 / JCM 1740 / NRRL 181 / WB 181) (Aspergillus fischerianus).